Reading from the N-terminus, the 453-residue chain is MVNKQLKKKAQEIGNVPTHYELEIEDYDQKQKKYGQAYFIWKDPKDPEKHITVELRNDGALLTFSTTVHSETDKKLPDAELKLTALQFAAANHPGTFMNFHFQGKEERGQHIRFVYTKMELGLPIPNSGFLIDMTRSGQIVHFLYYGEGHKAEVPTEFVAKEKVVSHYLNTMSFELMYDVIDGEQEPRLVYEPILPGYSYPADVDEIVPDQHIADERIENTAPLPPLQNKEEVDIFALLGFTSDMQKVSERDFGEQIGSTWRRGAAPERKDLSIGSYFETRNKNTIKMKTDKRTGKLKAALSFMDWRNNLQCSTEECQEIALQFLYALYPRAAEFFRVNPVRIDERGRVRNHFSVWYKGVPLRFGAARIIVNPETGLIDAFMAPDIEPEQLEAINHRPDVSAEEAKEAFLAAFDVKLEWQPDFTAGSDQHCKLVYKPVYPSYIDAHIRKKKRL.

It to B.subtilis YcdB.

This is an uncharacterized protein from Bacillus subtilis (strain 168).